A 313-amino-acid polypeptide reads, in one-letter code: Kazal-type serine protease inhibitor domain-containing protein 1 (313 aa).

A signal peptide spans Met1–Ala37. The region spanning Glu56–Arg136 is the IGFBP N-terminal domain. Intrachain disulfides connect Cys60-Cys83, Cys63-Cys85, Cys68-Cys86, Cys74-Cys89, Cys97-Cys115, Cys109-Cys133, and Cys142-Cys175. Residues Glu127 to Ser177 form the Kazal-like domain. 2 N-linked (GlcNAc...) asparagine glycosylation sites follow: Asn166 and Asn190. One can recognise an Ig-like C2-type domain in the interval Pro179–Thr276. Cysteines 200 and 260 form a disulfide. A glycan (N-linked (GlcNAc...) asparagine) is linked at Asn284. Residues Gln290–Tyr313 form a disordered region. Residues Pro298 to Tyr313 are compositionally biased toward acidic residues.

Highly expressed in the spleen. Moderately expressed in the skin, lung and urinary bladder. Weakly expressed in the brain, tongue, esophagus, stomach, large intestine, liver and bone. Expressed in osteoblastic cells during bone regeneration. Expressed in secretory osteoblasts in the tooth.

It localises to the secreted. The protein localises to the extracellular space. The protein resides in the extracellular matrix. Involved in the proliferation of osteoblasts during bone formation and bone regeneration. Promotes matrix assembly. The polypeptide is Kazal-type serine protease inhibitor domain-containing protein 1 (Kazald1) (Mus musculus (Mouse)).